The primary structure comprises 426 residues: Serine--tRNA ligase (426 aa).

233–235 (TAE) serves as a coordination point for L-serine. 264 to 266 (RSE) serves as a coordination point for ATP. Glu-287 contributes to the L-serine binding site. Residue 351-354 (EISS) coordinates ATP. L-serine is bound at residue Ser-387.

Belongs to the class-II aminoacyl-tRNA synthetase family. Type-1 seryl-tRNA synthetase subfamily. As to quaternary structure, homodimer. The tRNA molecule binds across the dimer.

The protein resides in the cytoplasm. It carries out the reaction tRNA(Ser) + L-serine + ATP = L-seryl-tRNA(Ser) + AMP + diphosphate + H(+). It catalyses the reaction tRNA(Sec) + L-serine + ATP = L-seryl-tRNA(Sec) + AMP + diphosphate + H(+). It functions in the pathway aminoacyl-tRNA biosynthesis; selenocysteinyl-tRNA(Sec) biosynthesis; L-seryl-tRNA(Sec) from L-serine and tRNA(Sec): step 1/1. Catalyzes the attachment of serine to tRNA(Ser). Is also able to aminoacylate tRNA(Sec) with serine, to form the misacylated tRNA L-seryl-tRNA(Sec), which will be further converted into selenocysteinyl-tRNA(Sec). The sequence is that of Serine--tRNA ligase from Pseudomonas putida (strain W619).